The chain runs to 95 residues: Protein TusB (95 aa).

This sequence belongs to the DsrH/TusB family. Heterohexamer, formed by a dimer of trimers. The hexameric TusBCD complex contains 2 copies each of TusB, TusC and TusD. The TusBCD complex interacts with TusE.

The protein resides in the cytoplasm. Its function is as follows. Part of a sulfur-relay system required for 2-thiolation of 5-methylaminomethyl-2-thiouridine (mnm(5)s(2)U) at tRNA wobble positions. This chain is Protein TusB, found in Yersinia enterocolitica serotype O:8 / biotype 1B (strain NCTC 13174 / 8081).